The following is a 476-amino-acid chain: UDP-N-acetylmuramate--L-alanine ligase (476 aa).

Residue glycine 121 to threonine 127 coordinates ATP.

Belongs to the MurCDEF family.

The protein localises to the cytoplasm. The enzyme catalyses UDP-N-acetyl-alpha-D-muramate + L-alanine + ATP = UDP-N-acetyl-alpha-D-muramoyl-L-alanine + ADP + phosphate + H(+). It functions in the pathway cell wall biogenesis; peptidoglycan biosynthesis. Functionally, cell wall formation. The protein is UDP-N-acetylmuramate--L-alanine ligase of Clavibacter sepedonicus (Clavibacter michiganensis subsp. sepedonicus).